A 285-amino-acid chain; its full sequence is Acetyl-coenzyme A carboxylase carboxyl transferase subunit beta (285 aa).

A CoA carboxyltransferase N-terminal domain is found at 29–285; that stretch reads IMTKCPKCKK…ILKIHQEVSN (257 aa). Cys33, Cys36, Cys52, and Cys55 together coordinate Zn(2+). The C4-type zinc finger occupies 33-55; that stretch reads CPKCKKIMYTKELNENLNVCFNC.

The protein belongs to the AccD/PCCB family. In terms of assembly, acetyl-CoA carboxylase is a heterohexamer composed of biotin carboxyl carrier protein (AccB), biotin carboxylase (AccC) and two subunits each of ACCase subunit alpha (AccA) and ACCase subunit beta (AccD). It depends on Zn(2+) as a cofactor.

It localises to the cytoplasm. It catalyses the reaction N(6)-carboxybiotinyl-L-lysyl-[protein] + acetyl-CoA = N(6)-biotinyl-L-lysyl-[protein] + malonyl-CoA. It participates in lipid metabolism; malonyl-CoA biosynthesis; malonyl-CoA from acetyl-CoA: step 1/1. In terms of biological role, component of the acetyl coenzyme A carboxylase (ACC) complex. Biotin carboxylase (BC) catalyzes the carboxylation of biotin on its carrier protein (BCCP) and then the CO(2) group is transferred by the transcarboxylase to acetyl-CoA to form malonyl-CoA. This Staphylococcus epidermidis (strain ATCC 12228 / FDA PCI 1200) protein is Acetyl-coenzyme A carboxylase carboxyl transferase subunit beta.